Here is a 70-residue protein sequence, read N- to C-terminus: Large ribosomal subunit protein bL31 (70 aa).

Zn(2+) contacts are provided by cysteine 16, cysteine 18, cysteine 37, and cysteine 40.

The protein belongs to the bacterial ribosomal protein bL31 family. Type A subfamily. Part of the 50S ribosomal subunit. Zn(2+) is required as a cofactor.

Functionally, binds the 23S rRNA. The chain is Large ribosomal subunit protein bL31 from Haemophilus influenzae (strain PittEE).